Here is a 353-residue protein sequence, read N- to C-terminus: Ion-translocating oxidoreductase complex subunit D (353 aa).

Transmembrane regions (helical) follow at residues 20-39, 68-88, and 129-149; these read LMRL…WYFF, PISH…LGIC, and VMLL…LTLV. T187 is modified (FMN phosphoryl threonine). 4 consecutive transmembrane segments (helical) span residues 215 to 235, 238 to 258, 267 to 287, and 300 to 320; these read LALG…FLIS, AIAW…SFIG, ASTM…FILT, and IIVG…GGYP.

The protein belongs to the NqrB/RnfD family. As to quaternary structure, the complex is composed of six subunits: RnfA, RnfB, RnfC, RnfD, RnfE and RnfG. FMN is required as a cofactor.

It localises to the cell inner membrane. Part of a membrane-bound complex that couples electron transfer with translocation of ions across the membrane. This Colwellia psychrerythraea (strain 34H / ATCC BAA-681) (Vibrio psychroerythus) protein is Ion-translocating oxidoreductase complex subunit D.